The sequence spans 236 residues: Orotidine 5'-phosphate decarboxylase (236 aa).

Substrate-binding positions include aspartate 14, lysine 36, 63–72 (DLKFHDIPNT), threonine 123, arginine 184, glutamine 193, glycine 213, and arginine 214. Lysine 65 functions as the Proton donor in the catalytic mechanism.

It belongs to the OMP decarboxylase family. Type 1 subfamily. Homodimer.

It catalyses the reaction orotidine 5'-phosphate + H(+) = UMP + CO2. The protein operates within pyrimidine metabolism; UMP biosynthesis via de novo pathway; UMP from orotate: step 2/2. Functionally, catalyzes the decarboxylation of orotidine 5'-monophosphate (OMP) to uridine 5'-monophosphate (UMP). The sequence is that of Orotidine 5'-phosphate decarboxylase from Marinobacter nauticus (strain ATCC 700491 / DSM 11845 / VT8) (Marinobacter aquaeolei).